The following is a 179-amino-acid chain: Large ribosomal subunit protein uL5 (179 aa).

Belongs to the universal ribosomal protein uL5 family. In terms of assembly, part of the 50S ribosomal subunit; part of the 5S rRNA/L5/L18/L25 subcomplex. Contacts the 5S rRNA and the P site tRNA. Forms a bridge to the 30S subunit in the 70S ribosome.

Its function is as follows. This is one of the proteins that bind and probably mediate the attachment of the 5S RNA into the large ribosomal subunit, where it forms part of the central protuberance. In the 70S ribosome it contacts protein S13 of the 30S subunit (bridge B1b), connecting the 2 subunits; this bridge is implicated in subunit movement. Contacts the P site tRNA; the 5S rRNA and some of its associated proteins might help stabilize positioning of ribosome-bound tRNAs. The protein is Large ribosomal subunit protein uL5 of Staphylococcus aureus (strain MW2).